The primary structure comprises 191 residues: Thymidylate kinase (191 aa).

7 to 14 (GVDGAGKS) lines the ATP pocket.

The protein belongs to the thymidylate kinase family.

The catalysed reaction is dTMP + ATP = dTDP + ADP. Its function is as follows. Phosphorylation of dTMP to form dTDP in both de novo and salvage pathways of dTTP synthesis. The protein is Thymidylate kinase (tmk) of Helicobacter pylori (strain ATCC 700392 / 26695) (Campylobacter pylori).